The chain runs to 358 residues: Src kinase-associated phosphoprotein 2 (358 aa).

Phosphoserine is present on residues S6 and S9. Residues 60-108 (PQEFQDKGDAEEGDEYDDPFAGPPDTISLASERYDKDDDGPSDGNQFPP) form a disordered region. Y75 is subject to Phosphotyrosine. Residues S87 and S90 each carry the phosphoserine modification. The region spanning 116 to 219 (FVIKAGYLEK…WVQQLKFILQ (104 aa)) is the PH domain. A phosphotyrosine mark is found at Y151 and Y197. S223 bears the Phosphoserine mark. The segment at 227-293 (PEDEDEKGDL…DSVQHPSGDK (67 aa)) is disordered. The span at 243 to 253 (PVPVSSPQRSQ) shows a compositional bias: low complexity. Positions 255–270 (IDDEIYEELPEEEEDT) are enriched in acidic residues. The residue at position 260 (Y260) is a Phosphotyrosine. Residues S272, S282, and S285 each carry the phosphoserine modification. Basic and acidic residues predominate over residues 274–293 (KMDEQGKGSRDSVQHPSGDK). In terms of domain architecture, SH3 spans 296–357 (DYANFYQGLW…PKAYLMEMYD (62 aa)).

It belongs to the SKAP family. As to quaternary structure, interacts with FYB1, which is required for SKAP2 protein stability. Interacts with PTPNS1. Part of a complex consisting of SKAP2, FYB1 and PTPNS1. Part of a complex consisting of SKAP2, FYB1 and LILRB3. Interacts with LAT, GRB2, PTK2B, and PRAM1. May interact with actin. May interact with FYN, HCK and LYN. Interacts with FASLG.

The protein resides in the cytoplasm. Its function is as follows. May be involved in B-cell and macrophage adhesion processes. In B-cells, may act by coupling the B-cell receptor (BCR) to integrin activation. May play a role in src signaling pathway. This is Src kinase-associated phosphoprotein 2 (Skap2) from Rattus norvegicus (Rat).